Consider the following 72-residue polypeptide: Aurein-2.3 (72 aa).

The first 22 residues, 1 to 22 (MAFLKKSLFLVLFLGLVSLSIC), serve as a signal peptide directing secretion. A propeptide spanning residues 23–49 (EKEKRQNGEDEDENEAANHEEGSEEKR) is cleaved from the precursor. Positions 27–47 (RQNGEDEDENEAANHEEGSEE) are disordered. Residues 38-47 (AANHEEGSEE) show a composition bias toward basic and acidic residues. The residue at position 65 (leucine 65) is a Leucine amide. Residues 69–72 (NDVE) constitute a propeptide that is removed on maturation.

In terms of processing, amidation is essential for antibacterial activity against Gram-positive bacteria. In terms of tissue distribution, expressed by the skin dorsal glands.

The protein localises to the secreted. It is found in the target cell membrane. Amphipathic alpha-helical antimicrobial peptide with weak to moderate activity against Gram-positive bacteria, and no activity against Gram-negative bacteria. Probably acts by disturbing membrane functions with its amphipathic structure. Strongly inhibits the formation of NO by neuronal nitric oxide synthase (nNOS) at micromolar concentrations. Acts by a non-competitive mechanism, probably by binding to calcium/calmodulin and as a consequence blocking calmodulin attachment to nNOS. The chain is Aurein-2.3 from Ranoidea aurea (Green and golden bell frog).